Reading from the N-terminus, the 169-residue chain is Neurotensin/neuromedin N (169 aa).

Positions 1 to 22 (MIGMNLQLVCLTLLAFSSWSLC) are cleaved as a signal peptide.

Belongs to the neurotensin family. In terms of assembly, interacts with NTSR1. Interacts with SORT1. Interacts with SORL1. In terms of processing, neurotensin is cleaved and degraded by Angiotensin-converting enzyme (ACE) and neprilysin (MME).

It is found in the secreted. Its subcellular location is the cytoplasmic vesicle. The protein localises to the secretory vesicle. Neurotensin may play an endocrine or paracrine role in the regulation of fat metabolism. It causes contraction of smooth muscle. The chain is Neurotensin/neuromedin N (Nts) from Rattus norvegicus (Rat).